Consider the following 141-residue polypeptide: MGFWDAVTDLIDAATPWATVEAEAPADTPAETAPASESTEETTAETKAEESAPAAEEPEEEAEEEEEEEEDEDEIVDPKETLEEECRNSKECAPAKHHYDECAARVTGAGADNKEDCVEEFFHLVHCATQCAAPKLWNTLK.

The span at 18–37 (ATVEAEAPADTPAETAPASE) shows a compositional bias: low complexity. Residues 18–94 (ATVEAEAPAD…ECRNSKECAP (77 aa)) are disordered. Residues 56–75 (EEPEEEAEEEEEEEEDEDEI) show a composition bias toward acidic residues. Over residues 76 to 94 (VDPKETLEEECRNSKECAP) the composition is skewed to basic and acidic residues. Cys102 and Cys117 are disulfide-bonded.

Belongs to the UQCRH/QCR6 family. As to quaternary structure, component of the ubiquinol-cytochrome c oxidoreductase (cytochrome b-c1 complex, complex III, CIII), a multisubunit enzyme composed of 10 subunits. The complex is composed of 3 respiratory subunits cytochrome b (cob), cytochrome c1 (cyt-1) and Rieske protein (fes-1), 2 core protein subunits pep and ucr-1, and 5 low-molecular weight protein subunits qcr6, qcr7, qcr8, qcr9 and probably NCU16844/qcr10. The complex exists as an obligatory dimer and forms supercomplexes (SCs) in the inner mitochondrial membrane with NADH-ubiquinone oxidoreductase (complex I, CI) and cytochrome c oxidase (complex IV, CIV), resulting in different assemblies (supercomplexes SCI(1)III(2), SCIII(2)IV(1) and SCIII(2)IV(2) as well as higher order I(x)III(y)IV(z) megacomplexes).

It is found in the mitochondrion inner membrane. Component of the ubiquinol-cytochrome c oxidoreductase, a multisubunit transmembrane complex that is part of the mitochondrial electron transport chain which drives oxidative phosphorylation. The respiratory chain contains 3 multisubunit complexes succinate dehydrogenase (complex II, CII), ubiquinol-cytochrome c oxidoreductase (cytochrome b-c1 complex, complex III, CIII) and cytochrome c oxidase (complex IV, CIV), that cooperate to transfer electrons derived from NADH and succinate to molecular oxygen, creating an electrochemical gradient over the inner membrane that drives transmembrane transport and the ATP synthase. The cytochrome b-c1 complex catalyzes electron transfer from ubiquinol to cytochrome c, linking this redox reaction to translocation of protons across the mitochondrial inner membrane, with protons being carried across the membrane as hydrogens on the quinol. In the process called Q cycle, 2 protons are consumed from the matrix, 4 protons are released into the intermembrane space and 2 electrons are passed to cytochrome c. The protein is Cytochrome b-c1 complex subunit 6, mitochondrial (qcr6) of Neurospora crassa (strain ATCC 24698 / 74-OR23-1A / CBS 708.71 / DSM 1257 / FGSC 987).